The sequence spans 84 residues: Hepcidin (84 aa).

Positions 1 to 24 (MALSSQIWAACLLLLLLLASLTSG) are cleaved as a signal peptide. Positions 25–54 (SVFPQQTGQLAELQPQDRAGARASWMPMFQ) are excised as a propeptide. 4 disulfide bridges follow: Cys66–Cys82, Cys69–Cys72, Cys70–Cys78, and Cys73–Cys81.

The protein belongs to the hepcidin family. Interacts with SLC40A1; this interaction promotes SLC40A1 rapid ubiquitination. In terms of tissue distribution, highest expression in liver and to a lesser extent in heart and brain. Low levels in lung, tonsils, salivary gland, trachea, prostate gland, adrenal gland and thyroid gland. Secreted into the urine and blood. Expressed by hepatocytes.

The protein resides in the secreted. Its function is as follows. Liver-produced hormone that constitutes the main circulating regulator of iron absorption and distribution across tissues. Acts by promoting endocytosis and degradation of ferroportin/SLC40A1, leading to the retention of iron in iron-exporting cells and decreased flow of iron into plasma. Controls the major flows of iron into plasma: absorption of dietary iron in the intestine, recycling of iron by macrophages, which phagocytose old erythrocytes and other cells, and mobilization of stored iron from hepatocytes. Functionally, has strong antimicrobial activity against E.coli ML35P N.cinerea and weaker against S.epidermidis, S.aureus and group b streptococcus bacteria. Active against the fungus C.albicans. No activity against P.aeruginosa. The sequence is that of Hepcidin from Homo sapiens (Human).